Reading from the N-terminus, the 337-residue chain is Alcohol dehydrogenase (337 aa).

Residues Cys38, His61, Cys92, Cys95, Cys98, Cys106, and Cys148 each contribute to the Zn(2+) site. NAD(+)-binding positions include 172–177, Asp195, Lys200, 260–262, and Arg331; these read GIGGLG and VGL.

It belongs to the zinc-containing alcohol dehydrogenase family. Requires Zn(2+) as cofactor.

It carries out the reaction a primary alcohol + NAD(+) = an aldehyde + NADH + H(+). The catalysed reaction is a secondary alcohol + NAD(+) = a ketone + NADH + H(+). Substrate inhibition is not observed with any alcohols, and the enzyme-NADH dissociation is not considered to be a rate-limiting step. In terms of biological role, NAD(+)-dependent alcohol dehydrogenase. The protein is Alcohol dehydrogenase (adhT) of Geobacillus stearothermophilus (Bacillus stearothermophilus).